The following is a 227-amino-acid chain: MSLDTVDKLVVFLAKRDGIDKLVKTFQYVAKLACWHVEATRPEAADRFKKWEVASGLSRKAFRTGRSLTGFNALRRNPGATPMIRFLAVLANSGEMVYFFFDHFLWLSRIGSIDAKLAKKMSFISAFGESFGYTFFIIIDCIFIKQRLKSLKKLQHSTDEPKEEIGAKISEIRGDIVMRLMGISANVADLLIALAEIHPNPFCNHTITLGISGLVSAWAGWYRNWPS.

Residues 1–85 (MSLDTVDKLV…RNPGATPMIR (85 aa)) are Cytoplasmic-facing. A helical transmembrane segment spans residues 86–106 (FLAVLANSGEMVYFFFDHFLW). At 107 to 201 (LSRIGSIDAK…IALAEIHPNP (95 aa)) the chain is on the lumenal side. Residues 202 to 222 (FCNHTITLGISGLVSAWAGWY) traverse the membrane as a helical segment. Over 223 to 227 (RNWPS) the chain is Cytoplasmic.

Belongs to the peroxin-11 family. As to quaternary structure, homooligomer. Interacts with ARC5 and FIS1B on peroxisomes. Expressed in roots, leaves and developing siliques.

It localises to the peroxisome membrane. Functionally, involved in peroxisomal proliferation. Promotes peroxisomal duplication, aggregation or elongation without fission. This is Peroxisomal membrane protein 11B (PEX11B) from Arabidopsis thaliana (Mouse-ear cress).